Reading from the N-terminus, the 424-residue chain is 3-phosphoshikimate 1-carboxyvinyltransferase (424 aa).

Residues lysine 21, serine 22, and arginine 26 each contribute to the 3-phosphoshikimate site. Lysine 21 contacts phosphoenolpyruvate. Positions 91 and 119 each coordinate phosphoenolpyruvate. The 3-phosphoshikimate site is built by serine 164, glutamine 166, aspartate 310, and lysine 337. Glutamine 166 contacts phosphoenolpyruvate. The active-site Proton acceptor is aspartate 310. Phosphoenolpyruvate contacts are provided by arginine 341 and arginine 382.

The protein belongs to the EPSP synthase family. Monomer.

It localises to the cytoplasm. The enzyme catalyses 3-phosphoshikimate + phosphoenolpyruvate = 5-O-(1-carboxyvinyl)-3-phosphoshikimate + phosphate. Its pathway is metabolic intermediate biosynthesis; chorismate biosynthesis; chorismate from D-erythrose 4-phosphate and phosphoenolpyruvate: step 6/7. Catalyzes the transfer of the enolpyruvyl moiety of phosphoenolpyruvate (PEP) to the 5-hydroxyl of shikimate-3-phosphate (S3P) to produce enolpyruvyl shikimate-3-phosphate and inorganic phosphate. The chain is 3-phosphoshikimate 1-carboxyvinyltransferase from Campylobacter curvus (strain 525.92).